Reading from the N-terminus, the 147-residue chain is Hemoglobin subunit beta (147 aa).

Val2 carries the N-acetylvaline modification. The Globin domain maps to 3-147; the sequence is NLTSDEKTAV…VANALAHKYH (145 aa). Ser45 is modified (phosphoserine). Lys60 is modified (N6-acetyllysine). Heme b is bound at residue His64. Lys83 carries the post-translational modification N6-acetyllysine. His93 provides a ligand contact to heme b. Cys94 is subject to S-nitrosocysteine. Lys145 is subject to N6-acetyllysine.

The protein belongs to the globin family. Heterotetramer of two alpha chains and two beta chains. As to expression, red blood cells.

Involved in oxygen transport from the lung to the various peripheral tissues. In Dasypus novemcinctus (Nine-banded armadillo), this protein is Hemoglobin subunit beta (HBB).